Here is a 146-residue protein sequence, read N- to C-terminus: MHPAHLLVLLAVCVSLLGASDIPPLPLNLAQFGFMIKCANHRSRPVSHYMDYGCYCGKGGSGTPVDELDRCCQVHDECYGEAEKRFKCVPYMTLYSWKCYGTAPSCNTKTDCQRFVCNCDAKAAECFARSPYQNKNWNINTKARCK.

A signal peptide spans 1 to 27; that stretch reads MHPAHLLVLLAVCVSLLGASDIPPLPL. 7 disulfide bridges follow: C38/C99, C54/C145, C56/C72, C71/C126, C78/C119, C88/C112, and C106/C117. Residues Y55, G57, and G59 each contribute to the Ca(2+) site. H75 is a catalytic residue. Ca(2+) is bound at residue D76. D120 is an active-site residue.

This sequence belongs to the phospholipase A2 family. Group I subfamily. D49 sub-subfamily. In terms of assembly, heterotrimer of alpha, beta, and gamma chains; non-covalently linked. Requires Ca(2+) as cofactor. Expressed by the venom gland.

The protein resides in the secreted. The enzyme catalyses a 1,2-diacyl-sn-glycero-3-phosphocholine + H2O = a 1-acyl-sn-glycero-3-phosphocholine + a fatty acid + H(+). Heterotrimer: Snake venom phospholipase A2 (PLA2) heterotrimer that acts as a potent presynaptic neurotoxin by blocking synaptic transmission and synaptic vesicle recycling. May act by binding in a calcium-dependent fashion to neurotonal pentraxin-1 (NPTX1) and neurotonal pentraxin-2 (NPTX2), but not to neuronal pentraxin receptor (NPTXR). Also binds to taipoxin-associated calcium binding protein 49 (RCN2), a protein localized in the lumen of endoplasmic reticulum. Functionally, monomer (alpha chain): Snake venom phospholipase A2 (PLA2) alpha chain that possesses the same high enzymatic activity than the heterotrimer. PLA2 catalyzes the calcium-dependent hydrolysis of the 2-acyl groups in 3-sn-phosphoglycerides. In Oxyuranus microlepidotus (Inland taipan), this protein is Basic phospholipase A2 paradoxin-like alpha chain.